Reading from the N-terminus, the 68-residue chain is Conotoxin Cal14.13a (68 aa).

The signal sequence occupies residues 1–21 (MKLCVVIVLLMLAMPFNGGEA). A propeptide spanning residues 22 to 38 (SRFFNQHARSQRSGMKT) is cleaved from the precursor. Valine 66 carries the valine amide modification.

Post-translationally, contains 2 disulfide bonds. Expressed by the venom duct.

Its subcellular location is the secreted. Functionally, probable neurotoxin with unknown target. Possibly targets ion channels. The chain is Conotoxin Cal14.13a from Californiconus californicus (California cone).